The sequence spans 255 residues: Menaquinol:cytochrome c reductase cytochrome c subunit (255 aa).

3 helical membrane passes run 46 to 62, 104 to 124, and 137 to 157; these read WMVG…LTIV, VVGA…APFL, and VAVG…WQSV. In terms of domain architecture, Cytochrome c spans 178 to 253; the sequence is DTNAEGYKVF…ELAKFISETT (76 aa). Heme c-binding residues include Cys-192, Cys-195, and His-196.

The protein belongs to the cytochrome b family. The main subunits of the menaquinol:cytochrome c complex are a Rieske-type iron-sulfur protein (QcrA), a cytochrome b (QcrB) and a cytochrome c (QcrC). Requires heme c as cofactor.

The protein localises to the cell membrane. Its function is as follows. Component of the menaquinol:cytochrome c reductase complex. This Bacillus subtilis (strain 168) protein is Menaquinol:cytochrome c reductase cytochrome c subunit (qcrC).